The primary structure comprises 378 residues: 23S rRNA (uracil(747)-C(5))-methyltransferase RlmC (378 aa).

[4Fe-4S] cluster-binding residues include Cys-3, Cys-11, Cys-14, and Cys-87. Gln-212, Phe-241, Glu-262, and Asn-309 together coordinate S-adenosyl-L-methionine. The active-site Nucleophile is Cys-336.

The protein belongs to the class I-like SAM-binding methyltransferase superfamily. RNA M5U methyltransferase family. RlmC subfamily.

It catalyses the reaction uridine(747) in 23S rRNA + S-adenosyl-L-methionine = 5-methyluridine(747) in 23S rRNA + S-adenosyl-L-homocysteine + H(+). Functionally, catalyzes the formation of 5-methyl-uridine at position 747 (m5U747) in 23S rRNA. This is 23S rRNA (uracil(747)-C(5))-methyltransferase RlmC from Shewanella halifaxensis (strain HAW-EB4).